We begin with the raw amino-acid sequence, 212 residues long: Abscisic acid receptor PYL10 (212 aa).

The segment at 34–191 (YAVGPGQCSS…NLQKLKSVSE (158 aa)) is START-like. Residues Lys-70, 107–112 (ASTSTE), 134–140 (RLRNYRS), and Glu-156 each bind abscisate. The Gate loop signature appears at 103–107 (SGLPA). Residues 133-135 (HRL) carry the Latch loop motif.

Belongs to the PYR/PYL/RCAR abscisic acid intracellular receptor family. Homodimer. Interacts with PP2C53. Binding to PP2C53 is dependent on the presence of abscisic acid (ABA). Interacts with PP2C50. Binding to PP2C50 is dependent on the presence of ABA.

Its subcellular location is the cytoplasm. The protein resides in the cytosol. It is found in the nucleus. Inhibits the protein phosphatases PP2C06 and PP2C09 when activated by abscisic acid (ABA). Together with PP2C53, SAPK8 and SAPK10, may form an ABA signaling module involved in stress response. The protein is Abscisic acid receptor PYL10 of Oryza sativa subsp. japonica (Rice).